We begin with the raw amino-acid sequence, 274 residues long: Dermonecrotic toxin SdSicTox-betaIIB1bii (274 aa).

Residue H5 is part of the active site. Mg(2+)-binding residues include E25 and D27. The active-site Nucleophile is the H41. Cystine bridges form between C45-C51 and C47-C190. D85 is a binding site for Mg(2+).

Belongs to the arthropod phospholipase D family. Class II subfamily. It depends on Mg(2+) as a cofactor. As to expression, expressed by the venom gland.

The protein resides in the secreted. It catalyses the reaction an N-(acyl)-sphingosylphosphocholine = an N-(acyl)-sphingosyl-1,3-cyclic phosphate + choline. The catalysed reaction is an N-(acyl)-sphingosylphosphoethanolamine = an N-(acyl)-sphingosyl-1,3-cyclic phosphate + ethanolamine. The enzyme catalyses a 1-acyl-sn-glycero-3-phosphocholine = a 1-acyl-sn-glycero-2,3-cyclic phosphate + choline. It carries out the reaction a 1-acyl-sn-glycero-3-phosphoethanolamine = a 1-acyl-sn-glycero-2,3-cyclic phosphate + ethanolamine. In terms of biological role, dermonecrotic toxins cleave the phosphodiester linkage between the phosphate and headgroup of certain phospholipids (sphingolipid and lysolipid substrates), forming an alcohol (often choline) and a cyclic phosphate. This toxin acts on sphingomyelin (SM). It may also act on ceramide phosphoethanolamine (CPE), lysophosphatidylcholine (LPC) and lysophosphatidylethanolamine (LPE), but not on lysophosphatidylserine (LPS), and lysophosphatidylglycerol (LPG). It acts by transphosphatidylation, releasing exclusively cyclic phosphate products as second products. Induces dermonecrosis, hemolysis, increased vascular permeability, edema, inflammatory response, and platelet aggregation. This Sicarius cf. damarensis (strain GJB-2008) (Six-eyed sand spider) protein is Dermonecrotic toxin SdSicTox-betaIIB1bii.